The primary structure comprises 327 residues: Metaxin-1 homolog (327 aa).

The helical transmembrane segment at 281–301 (IVAGVGAVLAMGAFAAWRGIY) threads the bilayer.

This sequence belongs to the metaxin family. As to quaternary structure, associates with the mitochondrial contact site and cristae organizing system (MICOS) complex (also known as MINOS or MitOS complex).

The protein localises to the mitochondrion outer membrane. Its function is as follows. Involved in transport of proteins into the mitochondrion. Essential for embryonic development. This is Metaxin-1 homolog from Drosophila melanogaster (Fruit fly).